The primary structure comprises 317 residues: Inositol oxygenase 4 (317 aa).

Substrate contacts are provided by residues R58 and 115–117 (DES). Positions 128, 153, and 154 each coordinate Fe cation. Substrate is bound by residues K157 and 174-175 (GD). Fe cation is bound by residues H226, H252, and D285. 252 to 253 (HS) contacts substrate.

It belongs to the myo-inositol oxygenase family. The cofactor is Fe cation. Expressed in flowers, leaves, siliques, and to a lesser extent in roots.

It is found in the cytoplasm. It catalyses the reaction myo-inositol + O2 = D-glucuronate + H2O + H(+). It participates in polyol metabolism; myo-inositol degradation into D-glucuronate; D-glucuronate from myo-inositol: step 1/1. Catalyzes the oxygenative cleavage of myo-inositol to D-glucuronate. Involved in the biosynthesis of UDP-glucuronic acid (UDP-GlcA), providing nucleotide sugars for cell-wall polymers. May be also involved in plant ascorbate biosynthesis. This is Inositol oxygenase 4 (MIOX4) from Arabidopsis thaliana (Mouse-ear cress).